Consider the following 73-residue polypeptide: Large ribosomal subunit protein bL31 (73 aa).

Zn(2+) is bound by residues cysteine 16, cysteine 18, cysteine 36, and cysteine 39.

The protein belongs to the bacterial ribosomal protein bL31 family. Type A subfamily. As to quaternary structure, part of the 50S ribosomal subunit. Zn(2+) is required as a cofactor.

Binds the 23S rRNA. This Citrifermentans bemidjiense (strain ATCC BAA-1014 / DSM 16622 / JCM 12645 / Bem) (Geobacter bemidjiensis) protein is Large ribosomal subunit protein bL31.